Reading from the N-terminus, the 315-residue chain is 4-hydroxy-3-methylbut-2-enyl diphosphate reductase (315 aa).

[4Fe-4S] cluster is bound at residue Cys-18. (2E)-4-hydroxy-3-methylbut-2-enyl diphosphate contacts are provided by His-47 and His-80. Dimethylallyl diphosphate is bound by residues His-47 and His-80. Isopentenyl diphosphate is bound by residues His-47 and His-80. Cys-102 is a [4Fe-4S] cluster binding site. His-130 serves as a coordination point for (2E)-4-hydroxy-3-methylbut-2-enyl diphosphate. His-130 is a binding site for dimethylallyl diphosphate. Isopentenyl diphosphate is bound at residue His-130. Catalysis depends on Glu-132, which acts as the Proton donor. Thr-171 contributes to the (2E)-4-hydroxy-3-methylbut-2-enyl diphosphate binding site. Cys-201 is a [4Fe-4S] cluster binding site. The (2E)-4-hydroxy-3-methylbut-2-enyl diphosphate site is built by Ser-229, Ser-230, Asn-231, and Ser-274. Ser-229, Ser-230, Asn-231, and Ser-274 together coordinate dimethylallyl diphosphate. The isopentenyl diphosphate site is built by Ser-229, Ser-230, Asn-231, and Ser-274.

It belongs to the IspH family. Requires [4Fe-4S] cluster as cofactor.

It carries out the reaction isopentenyl diphosphate + 2 oxidized [2Fe-2S]-[ferredoxin] + H2O = (2E)-4-hydroxy-3-methylbut-2-enyl diphosphate + 2 reduced [2Fe-2S]-[ferredoxin] + 2 H(+). It catalyses the reaction dimethylallyl diphosphate + 2 oxidized [2Fe-2S]-[ferredoxin] + H2O = (2E)-4-hydroxy-3-methylbut-2-enyl diphosphate + 2 reduced [2Fe-2S]-[ferredoxin] + 2 H(+). It participates in isoprenoid biosynthesis; dimethylallyl diphosphate biosynthesis; dimethylallyl diphosphate from (2E)-4-hydroxy-3-methylbutenyl diphosphate: step 1/1. It functions in the pathway isoprenoid biosynthesis; isopentenyl diphosphate biosynthesis via DXP pathway; isopentenyl diphosphate from 1-deoxy-D-xylulose 5-phosphate: step 6/6. Functionally, catalyzes the conversion of 1-hydroxy-2-methyl-2-(E)-butenyl 4-diphosphate (HMBPP) into a mixture of isopentenyl diphosphate (IPP) and dimethylallyl diphosphate (DMAPP). Acts in the terminal step of the DOXP/MEP pathway for isoprenoid precursor biosynthesis. This Hyphomonas neptunium (strain ATCC 15444) protein is 4-hydroxy-3-methylbut-2-enyl diphosphate reductase.